We begin with the raw amino-acid sequence, 697 residues long: uncharacterized protein (697 aa).

Residues 24 to 51 (CIRCRQKKIKCSGEKPSCQACSNNKVEC) constitute a DNA-binding region (zn(2)-C6 fungal-type). A helical transmembrane segment spans residues 500–520 (YIMSPFVGFSILTAATIHMLL).

It is found in the nucleus membrane. This is an uncharacterized protein from Schizosaccharomyces pombe (strain 972 / ATCC 24843) (Fission yeast).